A 204-amino-acid polypeptide reads, in one-letter code: Somatotropin (204 aa).

An N-terminal signal peptide occupies residues 1-17 (MERAVLLLSLLSLGVSS). Residue Gln18 is modified to Pyrrolidone carboxylic acid. His36 provides a ligand contact to Zn(2+). A disulfide bond links Cys69 and Cys177. Zn(2+) is bound at residue Glu186. Cys194 and Cys202 are joined by a disulfide.

Belongs to the somatotropin/prolactin family.

The protein localises to the secreted. Functionally, growth hormone plays an important role in growth control and involved in the regulation of several anabolic processes. In Perca flavescens (American yellow perch), this protein is Somatotropin (gh).